Consider the following 410-residue polypeptide: Na(+)-translocating NADH-quinone reductase subunit B (410 aa).

A run of 3 helical transmembrane segments spans residues 56-76 (MMIL…YNVG), 119-139 (LFGA…GGFW), and 159-179 (SILF…ALGI). FMN phosphoryl threonine is present on threonine 232. Helical transmembrane passes span 266–286 (GSIG…IVFA), 293–313 (IIAG…FIGS), 318–338 (MFAM…GMLF), 347–367 (SFTN…CVLI), and 377–397 (GMML…YFVA).

It belongs to the NqrB/RnfD family. Composed of six subunits; NqrA, NqrB, NqrC, NqrD, NqrE and NqrF. The cofactor is FMN.

The protein resides in the cell inner membrane. The enzyme catalyses a ubiquinone + n Na(+)(in) + NADH + H(+) = a ubiquinol + n Na(+)(out) + NAD(+). Its function is as follows. NQR complex catalyzes the reduction of ubiquinone-1 to ubiquinol by two successive reactions, coupled with the transport of Na(+) ions from the cytoplasm to the periplasm. NqrA to NqrE are probably involved in the second step, the conversion of ubisemiquinone to ubiquinol. The chain is Na(+)-translocating NADH-quinone reductase subunit B from Neisseria meningitidis serogroup A / serotype 4A (strain DSM 15465 / Z2491).